The chain runs to 163 residues: Bursicon (163 aa).

The signal sequence occupies residues M1 to A23. 5 disulfides stabilise this stretch: C39-C88, C53-C102, C63-C123, C67-C125, and C85-C128. In terms of domain architecture, CTCK spans C39–T129.

In terms of assembly, heterodimer of burs and pburs.

The protein resides in the secreted. In terms of biological role, final heterodimeric neurohormone released at the end of the molting cycle, involved in the sclerotization (tanning) of the insect cuticle, melanization and wing spreading. The chain is Bursicon (burs124) from Anopheles gambiae (African malaria mosquito).